A 206-amino-acid chain; its full sequence is CMP-5'-(N-acetyl-N-hydroxy-3-aminopropyl)phosphonate hydrolase (206 aa).

The 130-residue stretch at 37 to 166 (VRAPGAAIIV…RTVTSGTAIG (130 aa)) folds into the Nudix hydrolase domain. The Nudix box motif lies at 74-95 (GLVDDREDPAVTAAREAEEETG). Residues 177 to 194 (RQQPGGVQEQPGGAQQQG) are compositionally biased toward low complexity. The tract at residues 177 to 206 (RQQPGGVQEQPGGAQQQGMNESHSGRTVRG) is disordered.

This sequence belongs to the Nudix hydrolase family. It depends on Mg(2+) as a cofactor.

It carries out the reaction CMP-5'-(N-acetyl-N-hydroxy-3-aminopropyl)phosphonate + H2O = 3-(N-acetyl-N-hydroxy)aminopropylphosphonate + CMP + H(+). It participates in antibiotic biosynthesis. Nucleotide hydrolase involved in the biosynthesis of the phosphonate antibiotic FR-900098, a potent antimalarial agent that acts as an inhibitor of 1-deoxy-D-xylulose 5-phosphate reductoisomerase (DXR), the first enzyme in the nonmevalonate pathway for isoprenoid biosynthesis. Catalyzes the hydrolysis of CMP-5'-(N-acetyl-N-hydroxy-3-aminopropyl)phosphonate (CMP-5'-FR-900098) to produce CMP and the final compound FR-900098. In vitro, has broad substrate specificity and also catalyzes the hydrolysis of all the other CMP-containing intermediates within the pathway and shows low activity toward CTP. The sequence is that of CMP-5'-(N-acetyl-N-hydroxy-3-aminopropyl)phosphonate hydrolase from Streptomyces rubellomurinus (strain ATCC 31215).